Consider the following 456-residue polypeptide: tRNA (guanine(37)-N(1))-methyltransferase (456 aa).

Residues histidine 246, 284-285 (DL), 310-311 (DG), and asparagine 336 each bind S-adenosyl-L-methionine.

This sequence belongs to the class I-like SAM-binding methyltransferase superfamily. TRM5/TYW2 family. As to quaternary structure, monomer.

It is found in the mitochondrion matrix. The protein resides in the nucleus. It localises to the cytoplasm. The enzyme catalyses guanosine(37) in tRNA + S-adenosyl-L-methionine = N(1)-methylguanosine(37) in tRNA + S-adenosyl-L-homocysteine + H(+). Its function is as follows. Specifically methylates the N1 position of guanosine-37 in various cytoplasmic and mitochondrial tRNAs. Methylation is not dependent on the nature of the nucleoside 5' of the target nucleoside. This is the first step in the biosynthesis of wybutosine (yW), a modified base adjacent to the anticodon of tRNAs and required for accurate decoding. The sequence is that of tRNA (guanine(37)-N(1))-methyltransferase from Ciona intestinalis (Transparent sea squirt).